The sequence spans 189 residues: Lumazine protein (189 aa).

Lumazine-binding repeat units lie at residues 1 to 96 (MFKG…LGKG) and 97 to 189 (ALTG…SNEW).

6,7-dimethyl-8-(1-D-ribityl)lumazine serves as cofactor.

Functionally, antenna protein that modulates the color of the bioluminescence emission of the luciferase. In the presence of LumP, luciferase emission is shifted to higher energy values (shorter wavelength). In Photobacterium phosphoreum, this protein is Lumazine protein (luxL).